A 791-amino-acid chain; its full sequence is Vezatin (791 aa).

2 helical membrane-spanning segments follow: residues 138-158 (IATP…ALAA) and 163-183 (SISS…FTVL). Residues 435–464 (VRSLQLHLKALLNEVIILEDELEKLSSCKE) are a coiled coil. Acidic residues predominate over residues 752–769 (GDEWDDDDDDNDNDDDNY). A disordered region spans residues 752-791 (GDEWDDDDDDNDNDDDNYDQVKNVESHEKERNNVSLQLEE). A compositionally biased stretch (basic and acidic residues) spans 773 to 783 (KNVESHEKERN).

Belongs to the vezatin family. As to quaternary structure, interacts with myosin VIIa and the cadherin-catenins complex.

Its subcellular location is the cell membrane. It localises to the cell junction. The protein localises to the adherens junction. It is found in the nucleus. Plays a pivotal role in the establishment of adherens junctions and their maintenance in adult life. This Xenopus tropicalis (Western clawed frog) protein is Vezatin (vezt).